Reading from the N-terminus, the 492-residue chain is Ketol-acid reductoisomerase (NADP(+)) (492 aa).

The KARI N-terminal Rossmann domain occupies 14–208; sequence LDQLGRCRFM…GGHKAGVLES (195 aa). Residues 45-48, Arg-68, Arg-76, Ser-78, and 108-110 each bind NADP(+); these read CGAQ and DKQ. The active site involves His-132. Residue Gly-158 coordinates NADP(+). KARI C-terminal knotted domains are found at residues 209–344 and 345–485; these read SFVA…NAPK and YDGK…MTDM. Positions 217, 221, 389, and 393 each coordinate Mg(2+). Ser-414 is a binding site for substrate.

The protein belongs to the ketol-acid reductoisomerase family. Mg(2+) serves as cofactor.

The enzyme catalyses (2R)-2,3-dihydroxy-3-methylbutanoate + NADP(+) = (2S)-2-acetolactate + NADPH + H(+). It catalyses the reaction (2R,3R)-2,3-dihydroxy-3-methylpentanoate + NADP(+) = (S)-2-ethyl-2-hydroxy-3-oxobutanoate + NADPH + H(+). The protein operates within amino-acid biosynthesis; L-isoleucine biosynthesis; L-isoleucine from 2-oxobutanoate: step 2/4. It functions in the pathway amino-acid biosynthesis; L-valine biosynthesis; L-valine from pyruvate: step 2/4. Its function is as follows. Involved in the biosynthesis of branched-chain amino acids (BCAA). Catalyzes an alkyl-migration followed by a ketol-acid reduction of (S)-2-acetolactate (S2AL) to yield (R)-2,3-dihydroxy-isovalerate. In the isomerase reaction, S2AL is rearranged via a Mg-dependent methyl migration to produce 3-hydroxy-3-methyl-2-ketobutyrate (HMKB). In the reductase reaction, this 2-ketoacid undergoes a metal-dependent reduction by NADPH to yield (R)-2,3-dihydroxy-isovalerate. The sequence is that of Ketol-acid reductoisomerase (NADP(+)) from Haemophilus influenzae (strain 86-028NP).